A 553-amino-acid chain; its full sequence is MGDITWVEEGNGSATSSRKRKARPKRFEFVGWGSRQLIEFLHSLGKDTSEMISRYDVSDTIAKYISKEGLLDPSNKKKVVCDKRLVLLFGTRTIFRMKVYDLLEKHYKENQDDSDFDFLYEDEPQIICHSEKIAKRTSKVVKKPRGTFAAIVSDNIKLLYLRKSLVQELLKSPDTFEGKMLGSFVRIKSDPNDYLQKYPYQLVQVTGVKKEHGTDDFLLQVTNYVKDVSISVLSDDNFSQEECEDLHQRIKNGLLKKPTIVEMEEKAKKLHKDQTKHWLGREIELLKRLIDRANEKGWRRELSEYLDKRELLQNPDEQARLLREVPEVIGEELVQNPEVSSPEAHKSDNEQRLSESPLSCIHETPEARNLFGGEDQQFNNGYVMSNPITTPGITSCATEINKGLPTWIASAGAEYLHVDVEQPANGIIGGETPTEESKVSQLQSSIPVNNVDNGSQVQPNPSEVIELSDDDEDDNGDGETLDPKVEDVRVLSYDKEKLNWLYKDPQGLVQGPFSLTQLKAWSDAEYFTKQFRVWMTGESMESAVLLTDVLRLV.

One can recognise an SWIB/MDM2 domain in the interval 26-109 (RFEFVGWGSR…YDLLEKHYKE (84 aa)). Positions 150-275 (AIVSDNIKLL…KAKKLHKDQT (126 aa)) constitute a Plus3 domain. 2 disordered regions span residues 335–357 (QNPE…SESP) and 447–482 (PVNN…ETLD). Residues 343 to 353 (EAHKSDNEQRL) are compositionally biased toward basic and acidic residues. Over residues 447-461 (PVNNVDNGSQVQPNP) the composition is skewed to polar residues. The span at 466–480 (ELSDDDEDDNGDGET) shows a compositional bias: acidic residues. Positions 497–551 (KLNWLYKDPQGLVQGPFSLTQLKAWSDAEYFTKQFRVWMTGESMESAVLLTDVLR) constitute a GYF domain.

This is an uncharacterized protein from Arabidopsis thaliana (Mouse-ear cress).